The chain runs to 643 residues: Enzymatic polyprotein (643 aa).

The 204-residue stretch at 6–209 folds into the Peptidase A3A domain; it reads NPNATFITVK…KEVNVPNNIP (204 aa). Aspartate 26 serves as the catalytic For protease activity. Positions 226–410 constitute a Reverse transcriptase domain; it reads VRKGIIEESK…QTIDFLGLTL (185 aa). 3 residues coordinate Mg(2+): aspartate 296, aspartate 360, and aspartate 361.

The protein belongs to the caulimoviridae enzymatic polyprotein family.

The catalysed reaction is DNA(n) + a 2'-deoxyribonucleoside 5'-triphosphate = DNA(n+1) + diphosphate. Encodes for at least two polypeptides: protease (PR) and reverse transcriptase (RT). The protease processes the polyprotein in cis. Reverse transcriptase is multifunctional enzyme that converts the viral RNA genome into dsDNA in viral cytoplasmic capsids. This enzyme displays a DNA polymerase activity that can copy either DNA or RNA templates, and a ribonuclease H (RNase H) activity that cleaves the RNA strand of RNA-DNA heteroduplexes in a partially processive 3'- to 5'-endonucleasic mode. Neo-synthesized pregenomic RNA (pgRNA) are encapsidated, and reverse-transcribed inside the nucleocapsid. Partial (+)DNA is synthesized from the (-)DNA template and generates the relaxed circular DNA (RC-DNA) genome. After budding and infection, the RC-DNA migrates in the nucleus, and is converted into a plasmid-like covalently closed circular DNA (cccDNA). The polypeptide is Enzymatic polyprotein (Cestrum parqui (CmYLCV)).